The following is a 708-amino-acid chain: ATP-dependent DNA helicase Hel308 (708 aa).

Residues Gln-28 and 46 to 53 each bind ATP; that span reads TATASGKS. The region spanning 33–198 is the Helicase ATP-binding domain; that stretch reads RAGIFDGRSV…WLGARLVESS (166 aa). A DEAH box motif is present at residues 143-146; it reads DEIH. In terms of domain architecture, Helicase C-terminal spans 231 to 429; that stretch reads EVALAVDAVA…EPNLRAHVLG (199 aa).

It belongs to the helicase family. Hel308 subfamily. As to quaternary structure, monomer.

The enzyme catalyses Couples ATP hydrolysis with the unwinding of duplex DNA by translocating in the 3'-5' direction.. The catalysed reaction is ATP + H2O = ADP + phosphate + H(+). Functionally, DNA-dependent ATPase and 3'-5' DNA helicase that may be involved in repair of stalled replication forks. In Pyrobaculum calidifontis (strain DSM 21063 / JCM 11548 / VA1), this protein is ATP-dependent DNA helicase Hel308.